Here is a 193-residue protein sequence, read N- to C-terminus: dTTP/UTP pyrophosphatase (193 aa).

The active-site Proton acceptor is the D77.

It belongs to the Maf family. YhdE subfamily. The cofactor is a divalent metal cation.

The protein localises to the cytoplasm. The catalysed reaction is dTTP + H2O = dTMP + diphosphate + H(+). It carries out the reaction UTP + H2O = UMP + diphosphate + H(+). In terms of biological role, nucleoside triphosphate pyrophosphatase that hydrolyzes dTTP and UTP. May have a dual role in cell division arrest and in preventing the incorporation of modified nucleotides into cellular nucleic acids. This is dTTP/UTP pyrophosphatase from Parabacteroides distasonis (strain ATCC 8503 / DSM 20701 / CIP 104284 / JCM 5825 / NCTC 11152).